Consider the following 951-residue polypeptide: MSKTNKSKSGSRSSRSRSASRSRSRSFSKSRSRSRSVSRSRKRRLSSRSRSRSYSPAHNRERNHPRVYQNRDFRGHNRGYRRPYYFRGRNRGFYPWGQYNRGGYGNYRSNWQNYRQAYSPRRGRSRSRSPKRRSPSPRSRSHSRNSDKSSSDRSRRSSSSRLSSNHSRVESSKRKSTKEKKSSSKDSRPSQAAGDNQGDEAKEQTFSGGTSQDIKGSESSKPWPDATTYGAGSASRASVSDLSPRERSPALKSPLQSVVVRRRSPRPSPVPKPSPPLSNASQMGSSMSGGAGYQSGAHQGQFDHGSGSLSPSKKSPVGKSPPATGSAYGSSQKEESAASGGAAYSKRYLEEQKTENGKDKEQKQTNADKEKLKEKGGFSDADVKMKSDPFAPKTDSEKPFRGSQSPKRYKLRDDFEKKMADFHKEELDEHDKDKSKGRKEPEFDDEPKFMSKVIAGASKNQEEEKSGKWESLHTGKEKQRKAEEMEDEPFTERSRKEERGGSKRSESGHRGFVPEKNFRVTAYKAVQEKSSSPPPRKTSESRDKLGSKGDFSSGKSSFSITREAQVNVRMDSFDEDLARPSGLLAQERKLCRDLVHSNKKEQEFRSIFQHIQSAQSQRSPSELFAQHIVTIVHHVKEHHFGSSGMTLHERFTKYLKRGNEQEAAKNKKSPEIHRRIDISPSTFRKHGLTHEELKSPREPGYKAEGKYKDDPVDLRLDIERRKKHKERDLKRGKSRESVDSRDSSHSRERSTEKTEKTHKGSKKQKKHRRARDRSRSSSSSSQSSHSYKAEEYPEEAEEREESTSGFDKSRLGTKDFVGPNERGGRARGTFQFRARGRGWGRGNYSGNNNNNSNNDFQKRSREEEWDPEYTPKSKKYYLHDDREGEGSDKWMGRGRGRGAFPRGRGRFMFRKSSTSPKWAHDKFSGEEGEIEDDESGTENREEKDSLQPSAE.

Residues 1-13 (MSKTNKSKSGSRS) are compositionally biased toward low complexity. Disordered stretches follow at residues 1–94 (MSKT…RGFY), 117–558 (AYSP…KSSF), and 661–951 (QEAA…PSAE). The segment covering 14–51 (SRSRSASRSRSRSFSKSRSRSRSVSRSRKRRLSSRSRS) has biased composition (basic residues). Over residues 58 to 75 (HNRERNHPRVYQNRDFRG) the composition is skewed to basic and acidic residues. The span at 82–94 (RPYYFRGRNRGFY) shows a compositional bias: low complexity. The span at 121-143 (RRGRSRSRSPKRRSPSPRSRSHS) shows a compositional bias: basic residues. A compositionally biased stretch (basic and acidic residues) spans 144 to 155 (RNSDKSSSDRSR). Residues 157–166 (SSSSRLSSNH) are compositionally biased toward low complexity. Basic and acidic residues predominate over residues 167-188 (SRVESSKRKSTKEKKSSSKDSR). Residues 204-220 (QTFSGGTSQDIKGSESS) are compositionally biased toward polar residues. Residues 266–276 (RPSPVPKPSPP) are compositionally biased toward pro residues. 2 stretches are compositionally biased toward low complexity: residues 305–322 (GSGSLSPSKKSPVGKSPP) and 337–346 (AASGGAAYSK). Composition is skewed to basic and acidic residues over residues 347-387 (RYLE…KMKS), 411-449 (LRDDFEKKMADFHKEELDEHDKDKSKGRKEPEFDDEPKF), 460-483 (NQEEEKSGKWESLHTGKEKQRKAE), 490-518 (FTERSRKEERGGSKRSESGHRGFVPEKNF), and 537-547 (KTSESRDKLGS). A compositionally biased stretch (low complexity) spans 548 to 558 (KGDFSSGKSSF). ATP is bound at residue 549–556 (GDFSSGKS). Basic and acidic residues-rich tracts occupy residues 661–677 (QEAAKNKKSPEIHRRID) and 688–758 (LTHE…EKTH). The span at 759–772 (KGSKKQKKHRRARD) shows a compositional bias: basic residues. 2 stretches are compositionally biased toward low complexity: residues 776–786 (SSSSSSQSSHS) and 844–854 (YSGNNNNNSNN). Positions 877–891 (YLHDDREGEGSDKWM) are enriched in basic and acidic residues. Acidic residues predominate over residues 926–936 (EEGEIEDDESG).

It belongs to the BCLAF1/THRAP3 family. Associated with the large multiprotein complex TRAP (Mediator complex-like).

Its subcellular location is the nucleus. Involved in pre-mRNA splicing. Involved in nuclear mRNA decay. Initially thought to play a role in transcriptional coactivation through its association with the TRAP complex; however, it is not regarded as a stable Mediator complex subunit. May play a role in the positive regulation of the circadian clock. This Xenopus laevis (African clawed frog) protein is Thyroid hormone receptor-associated protein 3 (thrap3).